The following is a 273-amino-acid chain: Phycobilisome 32.1 kDa linker polypeptide, phycocyanin-associated, rod 2 (273 aa).

Residues 1–180 (MTSLVSAQRL…VYRGYATSDR (180 aa)) enclose the PBS-linker domain. The 54-residue stretch at 220–273 (NQMYRLQVIQGAAPGRGTRVRRGKAEYLVSYDNLSAKLQQINRQGDTVTMISLA) folds into the CpcD-like domain.

The protein belongs to the phycobilisome linker protein family. Part of 2 PBS rod complexes, the conventional CpcG-PBS rod and a photosystem I-specific CpcL-PBS rod, both of which include ferredoxin--NADP reductase (petH). CpcG-PBS has on average 3 stacked phycocyanin hexamers (PC, CpcA and CpcB). Linker CpcG connects the PC stack to the thylakoid, the hexamers are linked by 1 copy of CpcC1, 1 copy of CpcC2 and the stack is terminated by a single copy of CpcD. The CpcL-PBS has on average 5 stacked phycocyanin hexamers (PC, CpcA and CpcB). Linker CpcL connects the PC stack to the thylakoid, the hexamers are linked by 1 copy of CpcC1, 3 copies of CpcC2 and the stack is terminated by a single copy of CpcD. Interacts with the C-phycocyanin (PC) beta subunit (cpcB), it may fit into the center of the PC hexamer.

The protein resides in the cellular thylakoid membrane. Functionally, rod linker protein, associated with phycocyanin. Linker polypeptides determine the state of aggregation and the location of the disk-shaped phycobiliprotein units within the phycobilisome and modulate their spectroscopic properties in order to mediate a directed and optimal energy transfer. The protein is Phycobilisome 32.1 kDa linker polypeptide, phycocyanin-associated, rod 2 (cpcC2) of Synechocystis sp. (strain ATCC 27184 / PCC 6803 / Kazusa).